The primary structure comprises 495 residues: 3-octaprenyl-4-hydroxybenzoate carboxy-lyase (495 aa).

A Mn(2+)-binding site is contributed by Asn172. Residues 175–177 (IYR), 189–191 (RWL), and 194–195 (RG) each bind prenylated FMN. Glu238 is a binding site for Mn(2+). The active-site Proton donor is Asp287.

The protein belongs to the UbiD family. Homohexamer. Requires prenylated FMN as cofactor. The cofactor is Mn(2+).

The protein localises to the cell membrane. The catalysed reaction is a 4-hydroxy-3-(all-trans-polyprenyl)benzoate + H(+) = a 2-(all-trans-polyprenyl)phenol + CO2. Its pathway is cofactor biosynthesis; ubiquinone biosynthesis. In terms of biological role, catalyzes the decarboxylation of 3-octaprenyl-4-hydroxy benzoate to 2-octaprenylphenol, an intermediate step in ubiquinone biosynthesis. The chain is 3-octaprenyl-4-hydroxybenzoate carboxy-lyase from Edwardsiella ictaluri (strain 93-146).